Consider the following 175-residue polypeptide: O-acetyl-ADP-ribose deacetylase (175 aa).

The 175-residue stretch at 1–175 (MAVQPEVILG…IYRRLLASYP (175 aa)) folds into the Macro domain. Residues 11–12 (DI), asparagine 25, 33–35 (GVD), and 122–126 (STGVY) contribute to the substrate site. Aspartate 35 (proton acceptor) is an active-site residue.

Belongs to the MacroD-type family. YmdB subfamily. In terms of assembly, homodimer. Interacts with RNase III.

It catalyses the reaction 3''-O-acetyl-ADP-D-ribose + H2O = ADP-D-ribose + acetate + H(+). The enzyme catalyses 2''-O-acetyl-ADP-D-ribose + H2O = ADP-D-ribose + acetate + H(+). Deacetylates O-acetyl-ADP ribose to yield ADP-ribose and free acetate. Down-regulates ribonuclease 3 (RNase III) activity. Acts by interacting directly with the region of the ribonuclease that is required for dimerization/activation. In Klebsiella pneumoniae (strain 342), this protein is O-acetyl-ADP-ribose deacetylase.